A 239-amino-acid chain; its full sequence is Purine nucleoside phosphorylase DeoD-type (239 aa).

His-5 lines the a purine D-ribonucleoside pocket. Residues Gly-21, Arg-25, Arg-44, and 89–92 (RVGS) each bind phosphate. A purine D-ribonucleoside contacts are provided by residues 180-182 (EME) and 204-205 (SD). Asp-205 acts as the Proton donor in catalysis.

It belongs to the PNP/UDP phosphorylase family. Homohexamer; trimer of homodimers.

The enzyme catalyses a purine D-ribonucleoside + phosphate = a purine nucleobase + alpha-D-ribose 1-phosphate. It carries out the reaction a purine 2'-deoxy-D-ribonucleoside + phosphate = a purine nucleobase + 2-deoxy-alpha-D-ribose 1-phosphate. Its function is as follows. Catalyzes the reversible phosphorolytic breakdown of the N-glycosidic bond in the beta-(deoxy)ribonucleoside molecules, with the formation of the corresponding free purine bases and pentose-1-phosphate. The chain is Purine nucleoside phosphorylase DeoD-type from Klebsiella pneumoniae.